We begin with the raw amino-acid sequence, 225 residues long: NAD(P)H-quinone oxidoreductase subunit K, chloroplastic (225 aa).

[4Fe-4S] cluster contacts are provided by Cys-43, Cys-44, Cys-108, and Cys-139.

Belongs to the complex I 20 kDa subunit family. In terms of assembly, NDH is composed of at least 16 different subunits, 5 of which are encoded in the nucleus. [4Fe-4S] cluster is required as a cofactor.

The protein resides in the plastid. The protein localises to the chloroplast thylakoid membrane. The enzyme catalyses a plastoquinone + NADH + (n+1) H(+)(in) = a plastoquinol + NAD(+) + n H(+)(out). It catalyses the reaction a plastoquinone + NADPH + (n+1) H(+)(in) = a plastoquinol + NADP(+) + n H(+)(out). NDH shuttles electrons from NAD(P)H:plastoquinone, via FMN and iron-sulfur (Fe-S) centers, to quinones in the photosynthetic chain and possibly in a chloroplast respiratory chain. The immediate electron acceptor for the enzyme in this species is believed to be plastoquinone. Couples the redox reaction to proton translocation, and thus conserves the redox energy in a proton gradient. In Gossypium barbadense (Sea Island cotton), this protein is NAD(P)H-quinone oxidoreductase subunit K, chloroplastic.